Consider the following 126-residue polypeptide: MKLVRFLMKLSHETVNIELKNGTQVSGTIMGVDVAMNTHLRAVSMTVKNKEPVKLDTLSIRGNNIRYIILPDPLALDTLLIDDEPRKKARAARAGASRGRGRGGMRGGRGGRGRGRGGPRGGGPRR.

In terms of domain architecture, Sm spans Lys2–Leu74. Residues Arg86 to Arg126 form a disordered region. Basic residues predominate over residues Gly99 to Arg126.

This sequence belongs to the snRNP core protein family.

The protein localises to the nucleus. The protein resides in the cytoplasm. It is found in the cytosol. Its function is as follows. Plays a role in pre-mRNA splicing as a core component of the spliceosomal U1, U2, U4 and U5 small nuclear ribonucleoproteins (snRNPs), the building blocks of the spliceosome. The polypeptide is Probable small nuclear ribonucleoprotein Sm D1 (snr-3) (Caenorhabditis elegans).